A 338-amino-acid chain; its full sequence is 6-phosphogluconolactonase (338 aa).

The protein belongs to the cycloisomerase 2 family.

It carries out the reaction 6-phospho-D-glucono-1,5-lactone + H2O = 6-phospho-D-gluconate + H(+). It functions in the pathway carbohydrate degradation; pentose phosphate pathway; D-ribulose 5-phosphate from D-glucose 6-phosphate (oxidative stage): step 2/3. Functionally, catalyzes the hydrolysis of 6-phosphogluconolactone to 6-phosphogluconate. The polypeptide is 6-phosphogluconolactonase (Blochmanniella floridana).